Consider the following 101-residue polypeptide: Apolipoprotein C-II (101 aa).

The signal sequence occupies residues 1–22; that stretch reads MGARHLLALLLVLLVLGFEVQG. Residues 66-74 are lipid binding; sequence TMDEKIRDM. The tract at residues 78–101 is lipoprotein lipase cofactor; it reads STAAVSTYVGIFTDQLLSLLKGED.

Belongs to the apolipoprotein C2 family. Proapolipoprotein C-II is synthesized as a sialic acid containing glycoprotein which is subsequently desialylated prior to its proteolytic processing. In terms of processing, proapolipoprotein C-II, the major form found in plasma undergoes proteolytic cleavage of its N-terminal hexapeptide to generate apolipoprotein C-II, which occurs as the minor form in plasma.

It localises to the secreted. Functionally, component of chylomicrons, very low-density lipoproteins (VLDL), low-density lipoproteins (LDL), and high-density lipoproteins (HDL) in plasma. Plays an important role in lipoprotein metabolism as an activator of lipoprotein lipase. Both proapolipoprotein C-II and apolipoprotein C-II can activate lipoprotein lipase. This Tapirus terrestris (Lowland tapir) protein is Apolipoprotein C-II (APOC2).